The sequence spans 452 residues: Probable ECA polymerase (452 aa).

A run of 11 helical transmembrane segments spans residues 6–26 (FSGLLVVWLLSTLFIATLTWF), 37–57 (VFFSLLFLLTFFFGFPLTSVL), 63–83 (VGVAPPEILLQALLSAACFYG), 118–138 (VILMGIALVSVAIFFMHNGFL), 155–175 (GVALKRFFYFFIPAMLVVYFL), 181–201 (AWLFFLVSTVAFGLLTYMIVG), 207–227 (IIIAFAIFLFIGIIRGWISLW), 228–248 (MLAAAGVLGIVGMFWLALKRY), 341–361 (LVVMGGALFIPLGAIVVGLII), 378–398 (YKAAILHSFCFGAIFNMIVLA), and 410–430 (VFFLVVFGASLLVAKLLFWLF).

It belongs to the WzyE family. Probably part of a complex composed of WzxE, WzyE and WzzE.

It localises to the cell inner membrane. It participates in bacterial outer membrane biogenesis; enterobacterial common antigen biosynthesis. Probably involved in the polymerization of enterobacterial common antigen (ECA) trisaccharide repeat units. This Salmonella choleraesuis (strain SC-B67) protein is Probable ECA polymerase.